A 118-amino-acid polypeptide reads, in one-letter code: NADH-quinone oxidoreductase subunit A (118 aa).

3 helical membrane passes run 6–26 (LIIG…LLTA), 61–81 (FMYG…LPWA), and 87–107 (LGLF…IGLW).

Belongs to the complex I subunit 3 family. NDH-1 is composed of 14 different subunits. Subunits NuoA, H, J, K, L, M, N constitute the membrane sector of the complex.

Its subcellular location is the cell membrane. It carries out the reaction a quinone + NADH + 5 H(+)(in) = a quinol + NAD(+) + 4 H(+)(out). Its function is as follows. NDH-1 shuttles electrons from NADH, via FMN and iron-sulfur (Fe-S) centers, to quinones in the respiratory chain. The immediate electron acceptor for the enzyme in this species is believed to be a menaquinone. Couples the redox reaction to proton translocation (for every two electrons transferred, four hydrogen ions are translocated across the cytoplasmic membrane), and thus conserves the redox energy in a proton gradient. This chain is NADH-quinone oxidoreductase subunit A, found in Clostridium beijerinckii (strain ATCC 51743 / NCIMB 8052) (Clostridium acetobutylicum).